The chain runs to 138 residues: Calmodulin-beta (138 aa).

EF-hand domains lie at 1 to 32 (EFKE…LGQN), 33 to 68 (PTEA…KMKE), 70 to 105 (DSEE…LGEK), and 106 to 138 (LTDE…MTSK). Positions 10, 12, 14, 16, 21, 46, 48, 50, 52, 57, 83, 85, 87, 94, 119, 121, 123, 125, and 130 each coordinate Ca(2+).

It belongs to the calmodulin family.

Functionally, calmodulin mediates the control of a large number of enzymes, ion channels and other proteins by Ca(2+). Among the enzymes to be stimulated by the calmodulin-Ca(2+) complex are a number of protein kinases and phosphatases. The chain is Calmodulin-beta from Arbacia punctulata (Punctuate sea urchin).